Reading from the N-terminus, the 242-residue chain is Orotidine 5'-phosphate decarboxylase (242 aa).

Residues Asp-16, Lys-37, 64–73, Thr-128, Arg-190, Gln-199, Gly-219, and Arg-220 each bind substrate; that span reads DLKFHDIPNT. The active-site Proton donor is the Lys-66.

It belongs to the OMP decarboxylase family. Type 1 subfamily. In terms of assembly, homodimer.

It catalyses the reaction orotidine 5'-phosphate + H(+) = UMP + CO2. It participates in pyrimidine metabolism; UMP biosynthesis via de novo pathway; UMP from orotate: step 2/2. In terms of biological role, catalyzes the decarboxylation of orotidine 5'-monophosphate (OMP) to uridine 5'-monophosphate (UMP). The chain is Orotidine 5'-phosphate decarboxylase from Prochlorococcus marinus (strain AS9601).